Consider the following 343-residue polypeptide: Dihydroorotase (343 aa).

Residues His13 and His15 each contribute to the Zn(2+) site. Substrate contacts are provided by residues 15–17 and Asn41; that span reads HLR. Lys99, His136, and His174 together coordinate Zn(2+). Lys99 carries the post-translational modification N6-carboxylysine. His136 is a substrate binding site. Residue Leu219 participates in substrate binding. Asp247 provides a ligand contact to Zn(2+). Asp247 is a catalytic residue. Substrate-binding residues include His251 and Ala263.

The protein belongs to the metallo-dependent hydrolases superfamily. DHOase family. Class II DHOase subfamily. In terms of assembly, homodimer. The cofactor is Zn(2+).

The catalysed reaction is (S)-dihydroorotate + H2O = N-carbamoyl-L-aspartate + H(+). Its pathway is pyrimidine metabolism; UMP biosynthesis via de novo pathway; (S)-dihydroorotate from bicarbonate: step 3/3. Its function is as follows. Catalyzes the reversible cyclization of carbamoyl aspartate to dihydroorotate. The polypeptide is Dihydroorotase (Shewanella oneidensis (strain ATCC 700550 / JCM 31522 / CIP 106686 / LMG 19005 / NCIMB 14063 / MR-1)).